A 171-amino-acid chain; its full sequence is Putative defense protein (171 aa).

The first 23 residues, 1–23 (MKVYACLCAAVVMLVMTSRVSEA), serve as a signal peptide directing secretion. Residues 24-171 (RSTGAPLSAC…VQSAPIKIVS (148 aa)) enclose the Reelin domain. An intrachain disulfide couples Cys33 to Cys110. The N-linked (GlcNAc...) asparagine glycan is linked to Asn41.

It belongs to the insect defense protein family.

It localises to the secreted. May have antimicrobial activity. This Bombyx mori (Silk moth) protein is Putative defense protein.